Consider the following 505-residue polypeptide: ATP synthase subunit alpha (505 aa).

Position 170-177 (170-177 (GDRQTGKS)) interacts with ATP.

The protein belongs to the ATPase alpha/beta chains family. F-type ATPases have 2 components, CF(1) - the catalytic core - and CF(0) - the membrane proton channel. CF(1) has five subunits: alpha(3), beta(3), gamma(1), delta(1), epsilon(1). CF(0) has four main subunits: a(1), b(1), b'(1) and c(9-12).

The protein localises to the cellular thylakoid membrane. The enzyme catalyses ATP + H2O + 4 H(+)(in) = ADP + phosphate + 5 H(+)(out). Produces ATP from ADP in the presence of a proton gradient across the membrane. The alpha chain is a regulatory subunit. This is ATP synthase subunit alpha from Prochlorococcus marinus (strain MIT 9215).